Consider the following 795-residue polypeptide: MTAKPKTAPTDLDTLSKAKAKVELKRLSLEIERHNNAYYQDDAPKISDAEYDALRHRVEAIEAKFPELVSSDSPTQKVGAAPARGFAKVQHAVPMLSLGNAFSDDEVAEFLTRVRRFLKLDAEQIPAIVAEPKIDGLSLSLRYEHGKLVRAATRGDGFTGEDVTANVRTIKDIPHALAVAEPPAACELRGEVYMLKSDFLALNQRQETAGEPPFANPRNSAAGSLRQKDVAITASRPLKFFAYAWGEFSDLPEATQYGMLGWLKRAGFTVNPLITLCKSVDDALAFYRKIGEERATLPYDIDGVVYKVDRLDWQERLGFAGRAPRWAIAHKFAAEQATTILNGIEIQVGRTGALTPVARLAPVTVGGVVVQNATLHNEDYIKSLDIHIGDTVVVQRAGDVIPQIVSVVRDKRPEDAEPYEFPKFCPACGSHAVRDEDEGEAVRRCTGGLICPAQAIERLRHFVSRGAFDIAGFGETYVELLYEEGLVRNPADIFALHSKVDELKAALFRKRESLATQREEKTGKKRKSSLSEEKRQYTDVENLLAAIDARRTVAFNRFIFGLGIRHVGEVTSKALVRHFADVKAFLDGVDAAALARPGPAWLDLKNVRYIGEITLERLLEIQGGADTNEERQGFQPDARQRASLLSHYGNEEKIAGALQAARSEAPGPAFQQLANDSEIGEVATQSLIDFFEETNNRQVVTALMDQVQVERPAAASAKSPISGKIVVFTGALERTTRDEAKAIAERLGAKVASSVSSKTDLVVAGPSAGSKLRDAQKFGVKVLTEEEWAEISGNE.

NAD(+) contacts are provided by residues Asp48–Asp52, Ser97–Leu98, and Glu131. The N6-AMP-lysine intermediate role is filled by Lys133. 4 residues coordinate NAD(+): Arg154, Glu191, Lys307, and Lys331. Cys425, Cys428, Cys445, and Cys451 together coordinate Zn(2+). Positions Ser716 to Glu795 constitute a BRCT domain.

It belongs to the NAD-dependent DNA ligase family. LigA subfamily. Mg(2+) is required as a cofactor. It depends on Mn(2+) as a cofactor.

It carries out the reaction NAD(+) + (deoxyribonucleotide)n-3'-hydroxyl + 5'-phospho-(deoxyribonucleotide)m = (deoxyribonucleotide)n+m + AMP + beta-nicotinamide D-nucleotide.. Functionally, DNA ligase that catalyzes the formation of phosphodiester linkages between 5'-phosphoryl and 3'-hydroxyl groups in double-stranded DNA using NAD as a coenzyme and as the energy source for the reaction. It is essential for DNA replication and repair of damaged DNA. The protein is DNA ligase of Rhodopseudomonas palustris (strain BisB18).